Reading from the N-terminus, the 1361-residue chain is DNA-directed RNA polymerase subunit beta'' (1361 aa).

Residues C224, C295, C302, and C305 each contribute to the Zn(2+) site.

The protein belongs to the RNA polymerase beta' chain family. RpoC2 subfamily. In terms of assembly, in plastids the minimal PEP RNA polymerase catalytic core is composed of four subunits: alpha, beta, beta', and beta''. When a (nuclear-encoded) sigma factor is associated with the core the holoenzyme is formed, which can initiate transcription. Zn(2+) serves as cofactor.

The protein resides in the plastid. The protein localises to the chloroplast. The enzyme catalyses RNA(n) + a ribonucleoside 5'-triphosphate = RNA(n+1) + diphosphate. Its function is as follows. DNA-dependent RNA polymerase catalyzes the transcription of DNA into RNA using the four ribonucleoside triphosphates as substrates. The polypeptide is DNA-directed RNA polymerase subunit beta'' (Spinacia oleracea (Spinach)).